The following is a 147-amino-acid chain: MISLQSDQLLEATVGQFMIEADKVAHVQVGNNLEHALLVLTKTGYTAIPVLDPSYRLHGLIGTNMIMNSIFGLERIEFEKLDQITVEEVMLTDIPRLHINDPIMKGFGMVINNGFVCVENDEQVFEGIFTRRVVLKELNKHIRSLNK.

Positions Met18–Phe78 constitute a CBS domain. 3',3'-c-di-AMP contacts are provided by Lys23, Ala25, Thr46, Ala47, and Arg131.

As to quaternary structure, homodimer. Forms a homodimer with a parallel, head-to-head assembly of the monomers. Under conditions of potassium starvation and corresponding low c-di-AMP levels, apo-DarB specifically interacts with the N-terminal region of the RelA. Under the same conditions, apo-DarB also specifically interacts with the C-terminal part of the pyruvate carboxylase.

With respect to regulation, binds c-di-AMP. Binding of c-di-AMP to DarB inhibits the interaction with RelA and PYC. Its function is as follows. Involved in the c-di-AMP-dependent regulation of the bacterial stringent response. Modulates the activities of at least two enzymes under conditions of potassium limitation. Apo-DarB regulates the activity of the GTP pyrophosphokinase RelA by interacting directly with RelA, leading to stimulation of (p)ppGpp synthesis and induction of the stringent response. Apo-DarB also regulates pyruvate carboxylase (PYC) at two levels: directly at the protein level by binding to the enzyme and stimulating the synthesis of oxaloacetate and indirectly, by interaction with RelA, which leads to activation of the stringent response and to the increased expression of the pycA gene. Stimulation of these enzymes by DarB is prevented in the presence of cyclic di-AMP (c-di-AMP). This Bacillus subtilis (strain 168) protein is Cyclic di-AMP receptor B.